A 77-amino-acid chain; its full sequence is Conotoxin Vc6.14 (77 aa).

The signal sequence occupies residues 1 to 19 (MEKLTILLLVAAVLMSTQA). Residues 20–37 (MFQGGGEKRPKDKIKFLS) constitute a propeptide that is removed on maturation. 3 disulfides stabilise this stretch: Cys51–Cys65, Cys58–Cys69, and Cys64–Cys74.

It belongs to the conotoxin O2 superfamily. Expressed by the venom duct.

The protein localises to the secreted. In terms of biological role, inhibits voltage-gated ion channels. The sequence is that of Conotoxin Vc6.14 from Conus victoriae (Queen Victoria cone).